Reading from the N-terminus, the 397-residue chain is Ornithine aminotransferase (397 aa).

At Lys-255 the chain carries N6-(pyridoxal phosphate)lysine.

It belongs to the class-III pyridoxal-phosphate-dependent aminotransferase family. OAT subfamily. It depends on pyridoxal 5'-phosphate as a cofactor.

The protein resides in the cytoplasm. It carries out the reaction a 2-oxocarboxylate + L-ornithine = L-glutamate 5-semialdehyde + an L-alpha-amino acid. Its pathway is amino-acid biosynthesis; L-proline biosynthesis; L-glutamate 5-semialdehyde from L-ornithine: step 1/1. Catalyzes the interconversion of ornithine to glutamate semialdehyde. The chain is Ornithine aminotransferase from Macrococcus caseolyticus (strain JCSC5402) (Macrococcoides caseolyticum).